Consider the following 976-residue polypeptide: Ephrin type-A receptor 2 (976 aa).

The signal sequence occupies residues 1–23 (MELWAARACFVLLWGCALAPATA). Positions 1-206 (MELWAARACF…YYKKCPELLQ (206 aa)) are mediates interaction with CLDN4. At 25–537 (QGKEVVLLDF…SPEGSGSLAV (513 aa)) the chain is on the extracellular side. In terms of domain architecture, Eph LBD spans 28-206 (EVVLLDFAAA…YYKKCPELLQ (179 aa)). Disulfide bonds link cysteine 70-cysteine 188 and cysteine 105-cysteine 115. One can recognise a Fibronectin type-III 1 domain in the interval 328–432 (PPSAPHYLTA…TSRSFRTASV (105 aa)). Residues asparagine 407 and asparagine 435 are each glycosylated (N-linked (GlcNAc...) asparagine). The 92-residue stretch at 438–529 (EPPKVRLEGR…KVHEFQTLSP (92 aa)) folds into the Fibronectin type-III 2 domain. Residues 538 to 558 (IGGVAVCVVLLLLLAGAGFFI) form a helical membrane-spanning segment. At 559–976 (HRRRKNLRAR…DQVNTVGIPI (418 aa)) the chain is on the cytoplasmic side. Serine 570 bears the Phosphoserine mark. At tyrosine 575 the chain carries Phosphotyrosine. A Phosphoserine modification is found at serine 579. Tyrosine 588 carries the post-translational modification Phosphotyrosine; by autocatalysis. Residue tyrosine 594 is modified to Phosphotyrosine. Residues 606–906 (TEIHPSCVTR…STSGSEGVPF (301 aa)) form a mediates interaction with ARHGEF16 region. A Protein kinase domain is found at 613–875 (VTRQKVIGAG…DIVSILDKLI (263 aa)). 619 to 627 (IGAGEFGEV) lines the ATP pocket. At tyrosine 628 the chain carries Phosphotyrosine. Lysine 646 is an ATP binding site. Threonine 647 is subject to Phosphothreonine. Tyrosine 735 carries the post-translational modification Phosphotyrosine; by autocatalysis. Catalysis depends on aspartate 739, which acts as the Proton acceptor. A Phosphotyrosine modification is found at tyrosine 772. Phosphoserine is present on residues serine 869, serine 892, serine 897, and serine 901. A negatively regulates interaction with ARHGEF16 region spans residues 886-976 (DFDPRVSIRL…DQVNTVGIPI (91 aa)). The 65-residue stretch at 904-968 (VPFRTVSEWL…AYSLLGLKDQ (65 aa)) folds into the SAM domain. Tyrosine 921 carries the post-translational modification Phosphotyrosine; by autocatalysis. Tyrosine 930 carries the phosphotyrosine modification. The short motif at 974–976 (IPI) is the PDZ-binding element.

Belongs to the protein kinase superfamily. Tyr protein kinase family. Ephrin receptor subfamily. Homodimer. Interacts with SLA. Interacts (phosphorylated form) with VAV2, VAV3 and PI3-kinase p85 subunit (PIK3R1, PIK3R2 or PIK3R3); critical for the EFNA1-induced activation of RAC1 which stimulates cell migration. Interacts with INPPL1; regulates activated EPHA2 endocytosis and degradation. Interacts (inactivated form) with PTK2/FAK1 and interacts (EFNA1 ligand-activated form) with PTPN11; regulates integrin-mediated adhesion. Interacts with ARHGEF16, DOCK4 and ELMO2; mediates ligand-independent activation of RAC1 which stimulates cell migration. Interacts with CLDN4; phosphorylates CLDN4 and may regulate tight junctions. Interacts with ACP1. Interacts with ANKS1A. Interacts with CEMIP. Interacts with NCK1; may regulate EPHA2 activity in cell migration and adhesion. Interacts with TIMD4. Autophosphorylates. Phosphorylated on tyrosine upon binding and activation by EFNA1. Phosphorylated residues Tyr-588 and Tyr-594 are required for binding VAV2 and VAV3 while phosphorylated residues Tyr-735 and Tyr-930 are required for binding PI3-kinase p85 subunit (PIK3R1, PIK3R2 or PIK3R3). These phosphorylated residues are critical for recruitment of VAV2 and VAV3 and PI3-kinase p85 subunit which transduce downstream signaling to activate RAC1 GTPase and cell migration. Dephosphorylation of Tyr-930 by PTPRF prevents the interaction of EPHA2 with NCK1. Phosphorylated at Ser-897 by PKB; serum-induced phosphorylation which targets EPHA2 to the cell leading edge and stimulates cell migration. Phosphorylation by PKB is inhibited by EFNA1-activated EPHA2 which regulates PKB activity via a reciprocal regulatory loop. Phosphorylated at Ser-897 in response to TNF by RPS6KA1 and RPS6KA3; RPS6KA-EPHA2 signaling pathway controls cell migration. Phosphorylated at Ser-897 by PKA; blocks cell retraction induced by EPHA2 kinase activity. Dephosphorylated by ACP1. In terms of processing, ubiquitinated by CHIP/STUB1. Ubiquitination is regulated by the HSP90 chaperone and regulates the receptor stability and activity through proteasomal degradation. ANKS1A prevents ubiquitination and degradation.

The protein localises to the cell membrane. Its subcellular location is the cell projection. It localises to the ruffle membrane. It is found in the lamellipodium membrane. The protein resides in the cell junction. The protein localises to the focal adhesion. It carries out the reaction L-tyrosyl-[protein] + ATP = O-phospho-L-tyrosyl-[protein] + ADP + H(+). In terms of biological role, receptor tyrosine kinase which binds promiscuously membrane-bound ephrin-A family ligands residing on adjacent cells, leading to contact-dependent bidirectional signaling into neighboring cells. The signaling pathway downstream of the receptor is referred to as forward signaling while the signaling pathway downstream of the ephrin ligand is referred to as reverse signaling. Activated by the ligand ephrin-A1/EFNA1 regulates migration, integrin-mediated adhesion, proliferation and differentiation of cells. Regulates cell adhesion and differentiation through DSG1/desmoglein-1 and inhibition of the ERK1/ERK2 signaling pathway. May also participate in UV radiation-induced apoptosis and have a ligand-independent stimulatory effect on chemotactic cell migration. During development, may function in distinctive aspects of pattern formation and subsequently in development of several fetal tissues. Involved for instance in angiogenesis, in early hindbrain development and epithelial proliferation and branching morphogenesis during mammary gland development. Engaged by the ligand ephrin-A5/EFNA5 may regulate lens fiber cells shape and interactions and be important for lens transparency development and maintenance. With ephrin-A2/EFNA2 may play a role in bone remodeling through regulation of osteoclastogenesis and osteoblastogenesis. This chain is Ephrin type-A receptor 2 (EPHA2), found in Macaca fascicularis (Crab-eating macaque).